Reading from the N-terminus, the 555-residue chain is Esterase-5A (555 aa).

Residues methionine 1 to alanine 19 form the signal peptide. Cysteines 87 and 106 form a disulfide. Residues asparagine 95 and asparagine 116 are each glycosylated (N-linked (GlcNAc...) asparagine). Serine 210 functions as the Acyl-ester intermediate in the catalytic mechanism. A disulfide bridge links cysteine 262 with cysteine 274. N-linked (GlcNAc...) asparagine glycosylation is found at asparagine 479 and asparagine 510. A disulfide bond links cysteine 518 and cysteine 539.

It belongs to the type-B carboxylesterase/lipase family.

The protein localises to the secreted. It carries out the reaction a carboxylic ester + H2O = an alcohol + a carboxylate + H(+). In Drosophila miranda (Fruit fly), this protein is Esterase-5A (Est-5A).